Consider the following 264-residue polypeptide: Major prion protein (264 aa).

An N-terminal signal peptide occupies residues 1-24 (MVKSHIGSWILVLFVAMWSDVGLC). Positions 25-241 (KKRPKPGGGW…ESQAYYQRGA (217 aa)) are interaction with GRB2, ERI3 and SYN1. Positions 28–119 (PKPGGGWNTG…WNKPSKPKTN (92 aa)) are disordered. Tandem repeats lie at residues 54-62 (PQGGGGWGQ), 63-70 (PHGGGWGQ), 71-78 (PHGGGWGQ), 79-86 (PHGGGWGQ), 87-94 (PHGGGWGQ), and 95-103 (PHGGGGWGQ). Positions 54 to 103 (PQGGGGWGQPHGGGWGQPHGGGWGQPHGGGWGQPHGGGWGQPHGGGGWGQ) are 6 X 8 AA tandem repeats of P-H-G-G-G-W-G-Q. The segment covering 55–105 (QGGGGWGQPHGGGWGQPHGGGWGQPHGGGWGQPHGGGWGQPHGGGGWGQGG) has biased composition (gly residues). Cu(2+) contacts are provided by H72, G73, G74, H80, G81, G82, H88, G89, G90, H96, G98, and G99. Cysteines 190 and 225 form a disulfide. N-linked (GlcNAc...) asparagine glycans are attached at residues N192 and N208. A lipid anchor (GPI-anchor amidated alanine) is attached at A241. A propeptide spans 242 to 264 (SVILFSSPPVILLISFLIFLIVG) (removed in mature form).

This sequence belongs to the prion family. As to quaternary structure, monomer and homodimer. Has a tendency to aggregate into amyloid fibrils containing a cross-beta spine, formed by a steric zipper of superposed beta-strands. Soluble oligomers may represent an intermediate stage on the path to fibril formation. Copper binding may promote oligomerization. Interacts with GRB2, APP, ERI3/PRNPIP and SYN1. Mislocalized cytosolically exposed PrP interacts with MGRN1; this interaction alters MGRN1 subcellular location and causes lysosomal enlargement. Interacts with KIAA1191.

Its subcellular location is the cell membrane. It localises to the golgi apparatus. Its function is as follows. Its primary physiological function is unclear. Has cytoprotective activity against internal or environmental stresses. May play a role in neuronal development and synaptic plasticity. May be required for neuronal myelin sheath maintenance. May play a role in iron uptake and iron homeostasis. Soluble oligomers are toxic to cultured neuroblastoma cells and induce apoptosis (in vitro). Association with GPC1 (via its heparan sulfate chains) targets PRNP to lipid rafts. Also provides Cu(2+) or Zn(2+) for the ascorbate-mediated GPC1 deaminase degradation of its heparan sulfate side chains. The protein is Major prion protein (PRNP) of Antilope cervicapra (Blackbuck).